A 416-amino-acid chain; its full sequence is DNA-guanine transglycosylase (416 aa).

Residue Asp95 is the Proton acceptor of the active site. Catalysis depends on Asp256, which acts as the Nucleophile. Positions 368, 370, 373, and 395 each coordinate Zn(2+).

It belongs to the DNA-guanine transglycosylase family. The cofactor is Zn(2+).

In terms of biological role, part of the dpd cluster involved in the insertion of 7-deazaguanine derivatives in DNA. DpdA may insert 7-cyano-7-deazaguanine (preQ0) into DNA with the help of DpdB. DpdA and dpdB are necessary and sufficient to synthesize 2'-deoxy-7-cyano-7-deazaguanosine (dPreQ0). The protein is DNA-guanine transglycosylase of Salmonella montevideo.